We begin with the raw amino-acid sequence, 961 residues long: Retinoblastoma-like protein homolog lin-35 (961 aa).

Disordered regions lie at residues 1-43 (MPKR…PPAK) and 55-129 (GGVQ…TPPP). The segment covering 68 to 81 (ELTQMTIKQETEGN) has biased composition (polar residues). Residues 107–119 (GEDDDYEEDDADS) are compositionally biased toward acidic residues. The residue at position 714 (serine 714) is a Phosphoserine; by CDK4. Phosphothreonine; by CDK4 is present on threonine 719.

It belongs to the retinoblastoma protein (RB) family. Component of the DRM complex, at least composed of lin-9, lin-35, lin-37, lin-52, lin-53, lin-54, dpl-1 and efl-1. Interacts with lin-53. Interacts (via C-terminus) with dpl-1 (via C-terminus) and efl-1 (via C-terminus). Interacts (via C-terminus) with lin-8. In terms of processing, phosphorylated by the cyclin dependent kinase cdk-4. Phosphorylation inhibits the transcriptional repressor activity of lin-35 and allows for progression through the G1 phase of the cell cycle during postembryonic development.

It localises to the nucleus. Key regulator of cell division which acts as a transcriptional repressor and negatively regulates cell cycle progression in its active unphosphorylated form, but allows cell cycle progression when phosphorylated. When unphosphorylated and in its active form, interacts with E2F transcription factors such as efl-1 to repress their transcriptional activity and negatively regulate the progression through the G1 phase of the cell cycle during postembryonic development. May furthermore act with cell cycle regulator cki-1 to negatively regulate cell cycle progression. Acts redundantly with lin-53, fzr-1 and lin-23 to control cell cycle progression by regulating the expression of G1 phase cyclins. In particular, negatively regulates the expression of the cyclin E homolog cye-1, which is essential for the G1/S phase transition. Regulates cell division in the intestinal lineage, repressing the expression of genes such as cdc-25.2, which are required for intestinal cells to transition from the karyokinesis cell cycle (also known as nuclear division) to endoreplication, a specific growth pathway in the intestinal epithelium required for feeding and gut development in growing larvae during the L1 stage molt. Its role as a transcriptional repressor in the regulation of intestinal cell division during postembryonic development is most likely in complex with an E2F cell cycle regulatory transcription factor efl-1 and its binding partner the synthetic multivulva class B protein dpl-1. Synthetic multivulva (synMuv) class B protein. SynMuv proteins are required to repress the induction of vulval development by Ras signaling and probably act by forming the multiprotein DRM complex that represses transcription. Together with synMuv class B protein lin-53, and redundantly with synMuv class A protein lin-15A, represses transcription to control vulval development, most likely through antagonization of the Ras-signaling pathway in the major hypodermal syncytium hyp7. Acts redundantly with the transcriptional corepressor spr-1 and the zinc finger protein zfp-2 to play a role in vulval morphogenesis, promote germline proliferation and somatic gonad development. Acts redundantly with ubc-18 in the regulation of pharyngeal morphogenesis during embryonic development by negatively regulating the expression of proteins such as sup-35. Functions with the SWI/SNF complex and proteins such as pha-1 to regulate larval development. Functions redundantly with xnp-1 to regulate somatic gonad development. Acts redundantly with slr-2 to regulate the expression of intestinal genes required for nutrient utilization. Regulates transcription in response to starvation. Furthermore, in response to starvation, promotes germ cell programmed cell death by negatively regulating the expression of the anti-apoptotic protein ced-9. Conversely, in conjunction with mcd-1, efl-1 and the synthetic multivulva class B proteins dpl-1, lin-37 and lin-52, may also regulate transcription to promote programmed cell death independently of ced-1, ced-8 and ced-9 cell death pathways. Directly involved in heterochromatin formation by maintaining overall chromatin structure and, in particular, that of constitutive heterochromatin by stabilizing histone methylation. In particular, negatively regulates the expression of mes-4, a histone methyltransferase that controls the expression of germline specific genes. May play a role in double strand break formation during meiosis. May suppress sensitivity to RNAi. May play a role in the response to endoplasmic reticulum (ER) stress. The polypeptide is Retinoblastoma-like protein homolog lin-35 (Caenorhabditis elegans).